Here is a 675-residue protein sequence, read N- to C-terminus: 1,4-alpha-glucan branching enzyme TK1436 (675 aa).

The active-site Nucleophile is the glutamate 183. Substrate-binding residues include arginine 261 and glycine 278. Catalysis depends on aspartate 354, which acts as the Proton donor. Substrate is bound by residues tryptophan 407, aspartate 467, and glutamine 476. Disordered regions lie at residues 537–563 (PELE…KVLT) and 581–627 (EETR…LSIK). Basic and acidic residues-rich tracts occupy residues 549-563 (PPEK…KVLT) and 581-595 (EETR…EASK). Basic residues predominate over residues 596 to 616 (RGKRKSSKSKRLPRKVSKKAP).

The protein belongs to the glycosyl hydrolase 57 family. As to quaternary structure, monomer.

The catalysed reaction is Transfers a segment of a (1-&gt;4)-alpha-D-glucan chain to a primary hydroxy group in a similar glucan chain.. In terms of biological role, catalyzes the formation of branch points in alpha-glucans by cleavage of an alpha-1,4 glycosidic bond and subsequent transfer of the cleaved-off oligosaccharide to a new alpha-1,6 position. The branch chain-length distribution of the reaction products shows degree of polymerization (DP) of 5 to 30, with two local maxima at DP 6 and DP 11. Exhibits an alpha-retaining catalytic mechanism. Does not display alpha-galactosidase or pullulanase activity, since melibiose and pullulan are not substrates. Is not able to catalyze the hydrolysis or transglycosylation of maltoheptaose, suggesting that the TK1436 protein contains neither alpha-amylase nor 4-alpha-glucanotransferase activity. The protein is 1,4-alpha-glucan branching enzyme TK1436 of Thermococcus kodakarensis (strain ATCC BAA-918 / JCM 12380 / KOD1) (Pyrococcus kodakaraensis (strain KOD1)).